Consider the following 241-residue polypeptide: Probable transcriptional regulatory protein RALTA_A0859 (241 aa).

This sequence belongs to the TACO1 family.

Its subcellular location is the cytoplasm. This Cupriavidus taiwanensis (strain DSM 17343 / BCRC 17206 / CCUG 44338 / CIP 107171 / LMG 19424 / R1) (Ralstonia taiwanensis (strain LMG 19424)) protein is Probable transcriptional regulatory protein RALTA_A0859.